A 364-amino-acid polypeptide reads, in one-letter code: 3'(2'),5'-bisphosphate nucleotidase 1 (364 aa).

Aspartate 54 functions as the Proton acceptor in the catalytic mechanism. Glutamate 77, aspartate 141, isoleucine 143, and aspartate 144 together coordinate Mg(2+). The active-site Proton acceptor is the threonine 146. The adenosine 3',5'-bisphosphate site is built by threonine 146, histidine 243, serine 272, lysine 275, arginine 289, and aspartate 302. Positions 243, 272, 275, 289, and 302 each coordinate AMP. Aspartate 302 is a Mg(2+) binding site.

It belongs to the inositol monophosphatase superfamily. The cofactor is Mg(2+).

It catalyses the reaction 3'-phosphoadenylyl sulfate + H2O = adenosine 5'-phosphosulfate + phosphate. The catalysed reaction is adenosine 3',5'-bisphosphate + H2O = AMP + phosphate. The enzyme catalyses adenosine 2',5'-bisphosphate + H2O = AMP + phosphate. Its function is as follows. Phosphatase that converts adenosine 3'-phosphate 5'-phosphosulfate (PAPS) to adenosine 5'-phosphosulfate (APS) and 3'(2')-phosphoadenosine 5'-phosphate (PAP) to AMP. Regulates the flux of sulfur in the sulfur-activation pathway by converting PAPS to APS. Involved in salt tolerance. The sequence is that of 3'(2'),5'-bisphosphate nucleotidase 1 (HAL21) from Candida albicans (strain SC5314 / ATCC MYA-2876) (Yeast).